The chain runs to 411 residues: MTEQELVESGNMKMEWARNHMPVIAIIREKFEKEKPLKGLKVGMALHVEAKTAVLVETLAAGGAQVAISGCNPLSTQDDVARALDTRKNISCFARYGCCTSEYYEAIDKVLDIEPDITIDDGADLIFKLHKERTDLLPKILGGCEETTTGVHRLHAMEKEGALKMPVIAVNDAMTKYLFDNRYGTGQSAWDGINRTTNLLVAGKNVVVGGYGWCGRGVAMRAAGLGANVIVTEVDPIRALEARMDGYRVMRMADAARLGEIFVTTTGNRDILTAEHFKVMPDGAVLANSGHFNVEIDMEALTSLAKSVKTVRHNIKEYDIGDRRINVIAEGRLVNLAAGDGHPAEVMDMSFANQALCVRYIAENTLLNGVHGVPRGIDTYVAKLKLESMGISIDELTSKQECYMTGWECGT.

2 residues coordinate substrate: D121 and E146. Residue T147–T149 coordinates NAD(+). Positions 176 and 180 each coordinate substrate. Residues N181, G210–G215, E233, N268, S289–H291, and N335 contribute to the NAD(+) site.

It belongs to the adenosylhomocysteinase family. Requires NAD(+) as cofactor.

It is found in the cytoplasm. It catalyses the reaction S-inosyl-L-homocysteine + H2O = L-homocysteine + inosine. The protein operates within amino-acid biosynthesis; S-adenosyl-L-methionine biosynthesis. In terms of biological role, catalyzes the hydrolysis of S-inosyl-L-homocysteine (SIH) to L-homocysteine (Hcy) and inosine. Likely functions in a S-adenosyl-L-methionine (SAM) recycling pathway from S-adenosyl-L-homocysteine (SAH) produced from SAM-dependent methylation reactions. Can also catalyze the reverse reaction in vitro, i.e. the synthesis of SIH from Hcy and inosine. This is S-inosyl-L-homocysteine hydrolase from Methanosarcina acetivorans (strain ATCC 35395 / DSM 2834 / JCM 12185 / C2A).